A 475-amino-acid chain; its full sequence is Ribulose bisphosphate carboxylase large chain (475 aa).

Lys14 is subject to N6,N6,N6-trimethyllysine. Positions 123 and 173 each coordinate substrate. Lys175 functions as the Proton acceptor in the catalytic mechanism. Residue Lys177 participates in substrate binding. Mg(2+)-binding residues include Lys201, Asp203, and Glu204. Residue Lys201 is modified to N6-carboxylysine. His294 functions as the Proton acceptor in the catalytic mechanism. Residues Arg295, His327, and Ser379 each contribute to the substrate site.

This sequence belongs to the RuBisCO large chain family. Type I subfamily. Heterohexadecamer of 8 large chains and 8 small chains; disulfide-linked. The disulfide link is formed within the large subunit homodimers. Mg(2+) is required as a cofactor. The disulfide bond which can form in the large chain dimeric partners within the hexadecamer appears to be associated with oxidative stress and protein turnover.

The protein localises to the plastid. It localises to the chloroplast. It carries out the reaction 2 (2R)-3-phosphoglycerate + 2 H(+) = D-ribulose 1,5-bisphosphate + CO2 + H2O. It catalyses the reaction D-ribulose 1,5-bisphosphate + O2 = 2-phosphoglycolate + (2R)-3-phosphoglycerate + 2 H(+). Functionally, ruBisCO catalyzes two reactions: the carboxylation of D-ribulose 1,5-bisphosphate, the primary event in carbon dioxide fixation, as well as the oxidative fragmentation of the pentose substrate in the photorespiration process. Both reactions occur simultaneously and in competition at the same active site. The chain is Ribulose bisphosphate carboxylase large chain from Actinidia chinensis (Kiwi).